Consider the following 168-residue polypeptide: ATP synthase subunit b (168 aa).

A helical transmembrane segment spans residues 10-30 (STILGNFILVTASFAVLIILI).

The protein belongs to the ATPase B chain family. In terms of assembly, F-type ATPases have 2 components, F(1) - the catalytic core - and F(0) - the membrane proton channel. F(1) has five subunits: alpha(3), beta(3), gamma(1), delta(1), epsilon(1). F(0) has three main subunits: a(1), b(2) and c(10-14). The alpha and beta chains form an alternating ring which encloses part of the gamma chain. F(1) is attached to F(0) by a central stalk formed by the gamma and epsilon chains, while a peripheral stalk is formed by the delta and b chains.

It is found in the cell membrane. F(1)F(0) ATP synthase produces ATP from ADP in the presence of a proton or sodium gradient. F-type ATPases consist of two structural domains, F(1) containing the extramembraneous catalytic core and F(0) containing the membrane proton channel, linked together by a central stalk and a peripheral stalk. During catalysis, ATP synthesis in the catalytic domain of F(1) is coupled via a rotary mechanism of the central stalk subunits to proton translocation. Its function is as follows. Component of the F(0) channel, it forms part of the peripheral stalk, linking F(1) to F(0). The sequence is that of ATP synthase subunit b from Streptococcus suis (strain 98HAH33).